Here is a 425-residue protein sequence, read N- to C-terminus: MAFLALGINHKTASVDVRERVAFTPEQLVDALQQLCRLTSSREAAILSTCNRSELYIEQDHLSADAVLQWLADYHRLSIDELRASAYVHEEHDAVKHMMRVASGLDSLVLGEPQILGQMKSAYAVAREAGTVGPLLGRLFQATFSAAKQVRTDTAIGENPVSVAFAAVSLAKQIFADLGRSQALLIGAGETITLVARHLHEQGVRRIVVANRTLERASILAEQFGAHAVLLADIPQELANSDIVISSTASQLPILGKGAVESALKQRRHKPIFMVDIAVPRDIETEVGELDDVYLYTVDDLHDVVAENLKSRQGAAQAAEELVSVGAEDFMLRLRELAAVDVLRAYRQQSERLRDEELQKALRLLANGGNPEDVLAQLARGLTNKLLHAPSVQLKKLSAEGRLDALAMAQELFALNEGSTDKSPQ.

Residues 49–52 (TCNR), Ser-107, 112–114 (EPQ), and Gln-118 each bind substrate. The Nucleophile role is filled by Cys-50. Residue 187 to 192 (GAGETI) participates in NADP(+) binding.

This sequence belongs to the glutamyl-tRNA reductase family. As to quaternary structure, homodimer.

It catalyses the reaction (S)-4-amino-5-oxopentanoate + tRNA(Glu) + NADP(+) = L-glutamyl-tRNA(Glu) + NADPH + H(+). It functions in the pathway porphyrin-containing compound metabolism; protoporphyrin-IX biosynthesis; 5-aminolevulinate from L-glutamyl-tRNA(Glu): step 1/2. In terms of biological role, catalyzes the NADPH-dependent reduction of glutamyl-tRNA(Glu) to glutamate 1-semialdehyde (GSA). The chain is Glutamyl-tRNA reductase from Pseudomonas putida (strain ATCC 47054 / DSM 6125 / CFBP 8728 / NCIMB 11950 / KT2440).